A 155-amino-acid chain; its full sequence is Prespore-specific protein E (155 aa).

Positions 1–20 are cleaved as a signal peptide; the sequence is MRFISIFLIIVALCVSSSWA. Residues N22, N82, N85, and N102 are each glycosylated (N-linked (GlcNAc...) asparagine). S105 carries O-linked (GlcNAc) serine glycosylation. N133 is lipidated: GPI-like-anchor amidated asparagine. The propeptide at 134 to 155 is removed in mature form; the sequence is SADKVAVGIAIIFGALISLLAL.

The GPI-like-anchor contains a phosphoceramide group, rather than a phosphatidyl group.

Its subcellular location is the cell membrane. This is Prespore-specific protein E (pspE) from Dictyostelium discoideum (Social amoeba).